A 782-amino-acid polypeptide reads, in one-letter code: uncharacterized protein (782 aa).

Disordered regions lie at residues 1-25 (MFSPSKFRKQVNESESVSNCESTTS) and 175-195 (RPRTSPYKRAGDASMSREDLR). A compositionally biased stretch (low complexity) spans 13-25 (ESESVSNCESTTS). A compositionally biased stretch (basic and acidic residues) spans 183–195 (RAGDASMSREDLR). 4 coiled-coil regions span residues 223 to 331 (RENR…STLN), 348 to 398 (LSQF…VSTL), 428 to 601 (NRIN…QLLN), and 699 to 743 (TIET…IIAK). A disordered region spans residues 748–782 (NIPKTEKSSPMKKVPPIENFRAKSQTSITGLSPVL). Over residues 769-782 (AKSQTSITGLSPVL) the composition is skewed to polar residues.

This is an uncharacterized protein from Caenorhabditis elegans.